The primary structure comprises 102 residues: Monothiol glutaredoxin-S1 (102 aa).

Residues methionine 1–tryptophan 101 form the Glutaredoxin domain. Residue cysteine 21 coordinates [2Fe-2S] cluster.

Belongs to the glutaredoxin family. CC-type subfamily.

It is found in the cytoplasm. In terms of biological role, may only reduce GSH-thiol disulfides, but not protein disulfides. This Arabidopsis thaliana (Mouse-ear cress) protein is Monothiol glutaredoxin-S1 (GRXS1).